The sequence spans 381 residues: Homoserine O-succinyltransferase (381 aa).

In terms of domain architecture, AB hydrolase-1 spans 45 to 360 (NAVLVCHALN…PHGHDAFLLD (316 aa)). Ser-151 functions as the Nucleophile in the catalytic mechanism. Arg-221 is a binding site for substrate. Catalysis depends on residues Asp-321 and His-354. Substrate is bound at residue Asp-355.

Belongs to the AB hydrolase superfamily. MetX family. Homodimer.

It is found in the cytoplasm. The catalysed reaction is L-homoserine + succinyl-CoA = O-succinyl-L-homoserine + CoA. The protein operates within amino-acid biosynthesis; L-methionine biosynthesis via de novo pathway; O-succinyl-L-homoserine from L-homoserine: step 1/1. Functionally, transfers a succinyl group from succinyl-CoA to L-homoserine, forming succinyl-L-homoserine. This is Homoserine O-succinyltransferase from Burkholderia cenocepacia (strain HI2424).